Reading from the N-terminus, the 380-residue chain is Cytochrome b (380 aa).

Transmembrane regions (helical) follow at residues 33–53 (FGSLLGLCLFSQILTGLFLAM), 77–98 (WFIRSLHANGASFFFICIYLHI), 113–133 (WTIGVVLLGLVMATAFVGYVL), and 178–198 (FFTFHFLLPFIIAAATLVHLL). Positions 83 and 97 each coordinate heme b. Residues His-182 and His-196 each contribute to the heme b site. His-201 contributes to the a ubiquinone binding site. A run of 4 helical transmembrane segments spans residues 226-246 (YKDLLGFLALLSALTSLALFS), 288-308 (LGGVLALLFSILVLVLVPILH), 320-340 (LTQTLFWTLVADMLILTWIGG), and 347-367 (FVIIGQVASTLYFLLFLVLAP).

Belongs to the cytochrome b family. The cytochrome bc1 complex contains 3 respiratory subunits (MT-CYB, CYC1 and UQCRFS1), 2 core proteins (UQCRC1 and UQCRC2) and probably 6 low-molecular weight proteins. It depends on heme b as a cofactor.

It localises to the mitochondrion inner membrane. In terms of biological role, component of the ubiquinol-cytochrome c reductase complex (complex III or cytochrome b-c1 complex) that is part of the mitochondrial respiratory chain. The b-c1 complex mediates electron transfer from ubiquinol to cytochrome c. Contributes to the generation of a proton gradient across the mitochondrial membrane that is then used for ATP synthesis. The chain is Cytochrome b (mt-cyb) from Lampris guttatus (Opah).